We begin with the raw amino-acid sequence, 397 residues long: Arginine biosynthesis bifunctional protein ArgJ (397 aa).

Substrate contacts are provided by T147, K173, T184, E270, N392, and T397. T184 (nucleophile) is an active-site residue.

This sequence belongs to the ArgJ family. As to quaternary structure, heterotetramer of two alpha and two beta chains.

It is found in the cytoplasm. It carries out the reaction N(2)-acetyl-L-ornithine + L-glutamate = N-acetyl-L-glutamate + L-ornithine. The enzyme catalyses L-glutamate + acetyl-CoA = N-acetyl-L-glutamate + CoA + H(+). The protein operates within amino-acid biosynthesis; L-arginine biosynthesis; L-ornithine and N-acetyl-L-glutamate from L-glutamate and N(2)-acetyl-L-ornithine (cyclic): step 1/1. It functions in the pathway amino-acid biosynthesis; L-arginine biosynthesis; N(2)-acetyl-L-ornithine from L-glutamate: step 1/4. Its function is as follows. Catalyzes two activities which are involved in the cyclic version of arginine biosynthesis: the synthesis of N-acetylglutamate from glutamate and acetyl-CoA as the acetyl donor, and of ornithine by transacetylation between N(2)-acetylornithine and glutamate. The sequence is that of Arginine biosynthesis bifunctional protein ArgJ from Staphylococcus epidermidis (strain ATCC 35984 / DSM 28319 / BCRC 17069 / CCUG 31568 / BM 3577 / RP62A).